The chain runs to 280 residues: Octanoyltransferase LIP2p2, chloroplastic (280 aa).

Residues 1–34 (MVFSVATSSVTNPKLHHHHHLSDFNRNRVSTSLK) constitute a chloroplast transit peptide. Residues 81–270 (QECSDSLIIL…EFSEVFQLQM (190 aa)) enclose the BPL/LPL catalytic domain. Residues 123–130 (RGGEVTYH), 191–193 (AIG), and 204–206 (GLA) contribute to the substrate site. Catalysis depends on C222, which acts as the Acyl-thioester intermediate.

Belongs to the LipB family. In terms of tissue distribution, expressed in roots, leaves, cauline leaves, stems, siliques and flowers.

Its subcellular location is the plastid. It localises to the chloroplast. It catalyses the reaction octanoyl-[ACP] + L-lysyl-[protein] = N(6)-octanoyl-L-lysyl-[protein] + holo-[ACP] + H(+). It functions in the pathway protein modification; protein lipoylation via endogenous pathway; protein N(6)-(lipoyl)lysine from octanoyl-[acyl-carrier-protein]: step 1/2. In terms of biological role, catalyzes the transfer of endogenously produced octanoic acid from octanoyl-acyl-carrier-protein onto the lipoyl domains of lipoate-dependent enzymes. Lipoyl-ACP can also act as a substrate although octanoyl-ACP is likely to be the physiological substrate. Together with LIP1P is essential for de novo plastidial protein lipoylation during seed development. Acts redundantly with LIP2P. This chain is Octanoyltransferase LIP2p2, chloroplastic, found in Arabidopsis thaliana (Mouse-ear cress).